The primary structure comprises 252 residues: 7-cyano-7-deazaguanine synthase (252 aa).

22–32 is a binding site for ATP; that stretch reads FSGGQDSTTCL. Zn(2+) contacts are provided by cysteine 215, cysteine 230, cysteine 233, and cysteine 236.

The protein belongs to the QueC family. Zn(2+) is required as a cofactor.

It carries out the reaction 7-carboxy-7-deazaguanine + NH4(+) + ATP = 7-cyano-7-deazaguanine + ADP + phosphate + H2O + H(+). It participates in purine metabolism; 7-cyano-7-deazaguanine biosynthesis. Catalyzes the ATP-dependent conversion of 7-carboxy-7-deazaguanine (CDG) to 7-cyano-7-deazaguanine (preQ(0)). This chain is 7-cyano-7-deazaguanine synthase, found in Granulibacter bethesdensis (strain ATCC BAA-1260 / CGDNIH1).